The sequence spans 323 residues: MHNKFYRGRFAVAPMLDWTTRHCRYFHRQFSQQALLYTEMITAPAILHAKYDLLEYDPAEQPVALQLGGSDPTQLANCAKLVQARGYTEINLNVGCPSDRVQNGMFGACLMANADLVADCIKAMQDVVDIPVTIKHRIGIDTLDSYAFLCDFIDKIQPYSQDFIVHARKAWLSGLSPKENREIPPLDYERVYQLKRDFPQLNISINGGIKTIDEIKQHLTKVDGVMVGREAYQNPALLGEIDQQLFDQNQPLITARIAVENMLPYIEQQLSKGVYLNHIVRHMLGAFQNCKGARQWRRHLSENACKQGAGIEVVEQALRFVTE.

FMN is bound by residues 14–16 (PML) and Q66. C96 (proton donor) is an active-site residue. FMN-binding positions include K135, H166, 206 to 208 (NGG), and 228 to 229 (GR).

The protein belongs to the Dus family. DusA subfamily. FMN is required as a cofactor.

It carries out the reaction 5,6-dihydrouridine(20) in tRNA + NADP(+) = uridine(20) in tRNA + NADPH + H(+). The enzyme catalyses 5,6-dihydrouridine(20) in tRNA + NAD(+) = uridine(20) in tRNA + NADH + H(+). It catalyses the reaction 5,6-dihydrouridine(20a) in tRNA + NADP(+) = uridine(20a) in tRNA + NADPH + H(+). The catalysed reaction is 5,6-dihydrouridine(20a) in tRNA + NAD(+) = uridine(20a) in tRNA + NADH + H(+). Functionally, catalyzes the synthesis of 5,6-dihydrouridine (D), a modified base found in the D-loop of most tRNAs, via the reduction of the C5-C6 double bond in target uridines. Specifically modifies U20 and U20a in tRNAs. The sequence is that of tRNA-dihydrouridine(20/20a) synthase from Haemophilus ducreyi (strain 35000HP / ATCC 700724).